The sequence spans 444 residues: Tol-Pal system protein TolB (444 aa).

The first 18 residues, 1–18 (MRNIIYFILLLFSCTGYA), serve as a signal peptide directing secretion.

The protein belongs to the TolB family. In terms of assembly, the Tol-Pal system is composed of five core proteins: the inner membrane proteins TolA, TolQ and TolR, the periplasmic protein TolB and the outer membrane protein Pal. They form a network linking the inner and outer membranes and the peptidoglycan layer.

Its subcellular location is the periplasm. Functionally, part of the Tol-Pal system, which plays a role in outer membrane invagination during cell division and is important for maintaining outer membrane integrity. This Rickettsia canadensis (strain McKiel) protein is Tol-Pal system protein TolB.